Consider the following 207-residue polypeptide: ATP-dependent Clp protease proteolytic subunit (207 aa).

The Nucleophile role is filled by Ser111. His136 is a catalytic residue.

The protein belongs to the peptidase S14 family. In terms of assembly, fourteen ClpP subunits assemble into 2 heptameric rings which stack back to back to give a disk-like structure with a central cavity, resembling the structure of eukaryotic proteasomes.

It localises to the cytoplasm. The enzyme catalyses Hydrolysis of proteins to small peptides in the presence of ATP and magnesium. alpha-casein is the usual test substrate. In the absence of ATP, only oligopeptides shorter than five residues are hydrolyzed (such as succinyl-Leu-Tyr-|-NHMec, and Leu-Tyr-Leu-|-Tyr-Trp, in which cleavage of the -Tyr-|-Leu- and -Tyr-|-Trp bonds also occurs).. Functionally, cleaves peptides in various proteins in a process that requires ATP hydrolysis. Has a chymotrypsin-like activity. Plays a major role in the degradation of misfolded proteins. This chain is ATP-dependent Clp protease proteolytic subunit, found in Psychromonas ingrahamii (strain DSM 17664 / CCUG 51855 / 37).